The sequence spans 1041 residues: Cullin-associated NEDD8-dissociated protein 1, C-terminal part (1041 aa).

2 disordered regions span residues 1–24 (MSSD…ELRE) and 64–103 (DMGE…EGGY). The span at 9–24 (YSHDDEHDPQTDELRE) shows a compositional bias: basic and acidic residues. Residues 65 to 103 (MGEDEEMSGTQDDGSEDDVTEEPDLEDDDFEDFEEEGGY) show a composition bias toward acidic residues. The HEAT 1 repeat unit spans residues 138–176 (SLYQQIAPAIVARFNKEREESVKLELVSTMDALVRKTAE). A disordered region spans residues 189-237 (SVGSGSKISRKRRRQDSDASMIDFEPSMGTSSAAGTPLAAPSSPQSGPQ). Positions 225–237 (PLAAPSSPQSGPQ) are enriched in low complexity. HEAT repeat units lie at residues 242-279 (NALP…VRYG), 339-376 (PFLI…ALTP), 434-472 (LSFE…LCSR), 479-516 (NWVR…NPNT), 525-560 (MKNL…GNAQ), 598-637 (GSGL…NVGV), 670-708 (GASC…GNVK), 710-744 (YLPT…MVRR), 780-817 (LDPP…DSRD), and 822-867 (VLRP…HLGE).

The protein belongs to the CAND family. Interacts with candA-N. Interacts with unneddylated cullins culA and culD.

It is found in the nucleus. Assembly factor of SCF (SKP1-CUL1-F-box protein) E3 ubiquitin ligase complexes that promotes the exchange of the substrate-recognition F-box subunit in SCF complexes, thereby playing a key role in the cellular repertoire of SCF complexes. Acts as a F-box protein exchange factor when interacting with candA-N. The sequence is that of Cullin-associated NEDD8-dissociated protein 1, C-terminal part (candA-C) from Emericella nidulans (strain FGSC A4 / ATCC 38163 / CBS 112.46 / NRRL 194 / M139) (Aspergillus nidulans).